Here is a 30-residue protein sequence, read N- to C-terminus: Cyclotide cter-P (30 aa).

Residues 1 to 30 constitute a cross-link (cyclopeptide (Gly-Asn)); the sequence is GIPCGESCVFIPCITAAIGCSCKSKVCYRN. 3 disulfides stabilise this stretch: C4–C20, C8–C22, and C13–C27.

Post-translationally, this is a cyclic peptide.

It localises to the secreted. Its function is as follows. Probably participates in a plant defense mechanism. The chain is Cyclotide cter-P from Clitoria ternatea (Butterfly pea).